The sequence spans 177 residues: Large ribosomal subunit protein uL6 (177 aa).

Belongs to the universal ribosomal protein uL6 family. Part of the 50S ribosomal subunit.

Functionally, this protein binds to the 23S rRNA, and is important in its secondary structure. It is located near the subunit interface in the base of the L7/L12 stalk, and near the tRNA binding site of the peptidyltransferase center. This chain is Large ribosomal subunit protein uL6, found in Nitrosospira multiformis (strain ATCC 25196 / NCIMB 11849 / C 71).